We begin with the raw amino-acid sequence, 637 residues long: Nuclear receptor subfamily 2 group C member 1-A (637 aa).

Positions 149 to 224 (VELCVVCGDK…LGMKQDSVQC (76 aa)) form a DNA-binding region, nuclear receptor. 2 consecutive NR C4-type zinc fingers follow at residues 152–172 (CVVC…CEGC) and 188–207 (CRGS…CQYC). In terms of domain architecture, NR LBD spans 383–624 (CLGSNANLLH…SIIPYILRME (242 aa)).

The protein belongs to the nuclear hormone receptor family. NR2 subfamily.

It localises to the nucleus. Functionally, orphan nuclear receptor. Binds the IR7 element in the promoter of its own gene in an autoregulatory negative feedback mechanism. Primarily repressor of a broad range of genes. Binds to hormone response elements (HREs) consisting of two 5'-AGGTCA-3' half site direct repeat consensus sequences. This Xenopus laevis (African clawed frog) protein is Nuclear receptor subfamily 2 group C member 1-A (nr2c1-a).